The primary structure comprises 382 residues: Bifunctional enzyme IspD/IspF (382 aa).

Positions Met1 to Thr225 are 2-C-methyl-D-erythritol 4-phosphate cytidylyltransferase. Residues Arg226–Ala382 are 2-C-methyl-D-erythritol 2,4-cyclodiphosphate synthase. Residues Asp232 and His234 each coordinate a divalent metal cation. 4-CDP-2-C-methyl-D-erythritol 2-phosphate-binding positions include Asp232–His234 and His258–Ser259. A divalent metal cation is bound at residue His266. Residues Asp280 to Gly282, Thr356 to Glu359, Phe363, and Arg366 contribute to the 4-CDP-2-C-methyl-D-erythritol 2-phosphate site.

It in the N-terminal section; belongs to the IspD/TarI cytidylyltransferase family. IspD subfamily. In the C-terminal section; belongs to the IspF family. The cofactor is a divalent metal cation.

It carries out the reaction 2-C-methyl-D-erythritol 4-phosphate + CTP + H(+) = 4-CDP-2-C-methyl-D-erythritol + diphosphate. The catalysed reaction is 4-CDP-2-C-methyl-D-erythritol 2-phosphate = 2-C-methyl-D-erythritol 2,4-cyclic diphosphate + CMP. Its pathway is isoprenoid biosynthesis; isopentenyl diphosphate biosynthesis via DXP pathway; isopentenyl diphosphate from 1-deoxy-D-xylulose 5-phosphate: step 2/6. The protein operates within isoprenoid biosynthesis; isopentenyl diphosphate biosynthesis via DXP pathway; isopentenyl diphosphate from 1-deoxy-D-xylulose 5-phosphate: step 4/6. Bifunctional enzyme that catalyzes the formation of 4-diphosphocytidyl-2-C-methyl-D-erythritol from CTP and 2-C-methyl-D-erythritol 4-phosphate (MEP) (IspD), and catalyzes the conversion of 4-diphosphocytidyl-2-C-methyl-D-erythritol 2-phosphate (CDP-ME2P) to 2-C-methyl-D-erythritol 2,4-cyclodiphosphate (ME-CPP) with a corresponding release of cytidine 5-monophosphate (CMP) (IspF). This is Bifunctional enzyme IspD/IspF from Caulobacter vibrioides (strain ATCC 19089 / CIP 103742 / CB 15) (Caulobacter crescentus).